Reading from the N-terminus, the 228-residue chain is LexA repressor (228 aa).

A DNA-binding region (H-T-H motif) is located at residues 26–46 (FDEMKEALDLRSKSGIHRLIT). Active-site for autocatalytic cleavage activity residues include Ser149 and Lys187.

Belongs to the peptidase S24 family. Homodimer.

The catalysed reaction is Hydrolysis of Ala-|-Gly bond in repressor LexA.. Represses a number of genes involved in the response to DNA damage (SOS response), including recA and lexA. In the presence of single-stranded DNA, RecA interacts with LexA causing an autocatalytic cleavage which disrupts the DNA-binding part of LexA, leading to derepression of the SOS regulon and eventually DNA repair. The chain is LexA repressor from Jannaschia sp. (strain CCS1).